We begin with the raw amino-acid sequence, 338 residues long: UDP-N-acetylenolpyruvoylglucosamine reductase (338 aa).

The 172-residue stretch at 17-188 (IAARTDWWID…MYVDYRLRLK (172 aa)) folds into the FAD-binding PCMH-type domain. Residue Arg164 is part of the active site. Ser237 functions as the Proton donor in the catalytic mechanism. Glu333 is an active-site residue.

Belongs to the MurB family. It depends on FAD as a cofactor.

The protein resides in the cytoplasm. It catalyses the reaction UDP-N-acetyl-alpha-D-muramate + NADP(+) = UDP-N-acetyl-3-O-(1-carboxyvinyl)-alpha-D-glucosamine + NADPH + H(+). The protein operates within cell wall biogenesis; peptidoglycan biosynthesis. Its function is as follows. Cell wall formation. The sequence is that of UDP-N-acetylenolpyruvoylglucosamine reductase from Porphyromonas gingivalis (strain ATCC BAA-308 / W83).